Consider the following 141-residue polypeptide: Lutropin subunit beta (141 aa).

The N-terminal stretch at 1–20 (MERLQGLLLWLLLSPSVVWA) is a signal peptide. Intrachain disulfides connect Cys29-Cys77, Cys43-Cys92, Cys54-Cys108, Cys58-Cys110, and Cys113-Cys120. Asn33 is a glycosylation site (N-linked (GlcNAc...) asparagine).

This sequence belongs to the glycoprotein hormones subunit beta family. As to quaternary structure, heterodimer of a common alpha chain and a unique beta chain which confers biological specificity to thyrotropin, lutropin, follitropin and gonadotropin.

It is found in the secreted. Functionally, promotes spermatogenesis and ovulation by stimulating the testes and ovaries to synthesize steroids. The protein is Lutropin subunit beta (Lhb) of Mus musculus (Mouse).